The chain runs to 117 residues: Holo-[acyl-carrier-protein] synthase (117 aa).

Mg(2+)-binding residues include D8 and E57.

It belongs to the P-Pant transferase superfamily. AcpS family. Mg(2+) is required as a cofactor.

It localises to the cytoplasm. The enzyme catalyses apo-[ACP] + CoA = holo-[ACP] + adenosine 3',5'-bisphosphate + H(+). Its function is as follows. Transfers the 4'-phosphopantetheine moiety from coenzyme A to a Ser of acyl-carrier-protein. In Limosilactobacillus reuteri (Lactobacillus reuteri), this protein is Holo-[acyl-carrier-protein] synthase.